A 140-amino-acid polypeptide reads, in one-letter code: Transmembrane protein 107 (140 aa).

A run of 2 helical transmembrane segments spans residues 7–27 (LVPS…TLFW) and 53–73 (LVAA…GFLS). The N-linked (GlcNAc...) asparagine glycan is linked to Asn79. 2 consecutive transmembrane segments (helical) span residues 83-103 (SLIS…FIFE) and 113-133 (IFVF…VTVF).

Part of the tectonic-like complex (also named B9 complex). Interacts with TMEM237, TMEM231, MKS1 and TMEM216.

It is found in the membrane. It localises to the cell projection. The protein resides in the cilium. Functionally, plays a role in cilia formation and embryonic patterning. Requires for normal Sonic hedgehog (Shh) signaling in the neural tube and acts in combination with GLI2 and GLI3 to pattern ventral and intermediate neuronal cell types. During ciliogenesis regulates the ciliary transition zone localization of some MKS complex proteins. The sequence is that of Transmembrane protein 107 from Homo sapiens (Human).